The following is a 315-amino-acid chain: GPN-loop GTPase 2 (315 aa).

12–17 (GSGKST) provides a ligand contact to GTP. Positions 69-71 (GPN) match the Gly-Pro-Asn (GPN)-loop; involved in dimer interface motif. 172–175 (SKAD) serves as a coordination point for GTP.

It belongs to the GPN-loop GTPase family. In terms of assembly, heterodimers with gpn1 or fet5/gpn3. Binds to RNA polymerase II (RNAPII).

The protein resides in the cytoplasm. It localises to the nucleus. Small GTPase required for proper nuclear import of RNA polymerase II and III (RNAPII and RNAPIII). May act at an RNAP assembly step prior to nuclear import. The chain is GPN-loop GTPase 2 from Schizosaccharomyces pombe (strain 972 / ATCC 24843) (Fission yeast).